Here is a 106-residue protein sequence, read N- to C-terminus: Large ribosomal subunit protein bL21c (106 aa).

This sequence belongs to the bacterial ribosomal protein bL21 family. Part of the 50S ribosomal subunit.

It localises to the plastid. The protein localises to the chloroplast. This protein binds to 23S rRNA. This Gracilaria tenuistipitata var. liui (Red alga) protein is Large ribosomal subunit protein bL21c.